The chain runs to 351 residues: UDP-N-acetylglucosamine--N-acetylmuramyl-(pentapeptide) pyrophosphoryl-undecaprenol N-acetylglucosamine transferase (351 aa).

UDP-N-acetyl-alpha-D-glucosamine contacts are provided by residues 12 to 14 (TGG), N124, R160, S188, I239, 258 to 263 (ALTVCE), and Q283.

This sequence belongs to the glycosyltransferase 28 family. MurG subfamily.

It localises to the cell inner membrane. The catalysed reaction is di-trans,octa-cis-undecaprenyl diphospho-N-acetyl-alpha-D-muramoyl-L-alanyl-D-glutamyl-meso-2,6-diaminopimeloyl-D-alanyl-D-alanine + UDP-N-acetyl-alpha-D-glucosamine = di-trans,octa-cis-undecaprenyl diphospho-[N-acetyl-alpha-D-glucosaminyl-(1-&gt;4)]-N-acetyl-alpha-D-muramoyl-L-alanyl-D-glutamyl-meso-2,6-diaminopimeloyl-D-alanyl-D-alanine + UDP + H(+). It functions in the pathway cell wall biogenesis; peptidoglycan biosynthesis. Functionally, cell wall formation. Catalyzes the transfer of a GlcNAc subunit on undecaprenyl-pyrophosphoryl-MurNAc-pentapeptide (lipid intermediate I) to form undecaprenyl-pyrophosphoryl-MurNAc-(pentapeptide)GlcNAc (lipid intermediate II). The polypeptide is UDP-N-acetylglucosamine--N-acetylmuramyl-(pentapeptide) pyrophosphoryl-undecaprenol N-acetylglucosamine transferase (Actinobacillus pleuropneumoniae serotype 7 (strain AP76)).